The chain runs to 89 residues: Large ribosomal subunit protein uL23c (89 aa).

It belongs to the universal ribosomal protein uL23 family. Part of the 50S ribosomal subunit.

The protein resides in the plastid. It is found in the chloroplast. Binds to 23S rRNA. The chain is Large ribosomal subunit protein uL23c (rpl23) from Zygnema circumcarinatum (Green alga).